The sequence spans 466 residues: Asparagine--tRNA ligase (466 aa).

Belongs to the class-II aminoacyl-tRNA synthetase family. As to quaternary structure, homodimer.

Its subcellular location is the cytoplasm. The enzyme catalyses tRNA(Asn) + L-asparagine + ATP = L-asparaginyl-tRNA(Asn) + AMP + diphosphate + H(+). This chain is Asparagine--tRNA ligase, found in Shewanella baltica (strain OS195).